A 191-amino-acid chain; its full sequence is Protein GrpE (191 aa).

Belongs to the GrpE family. As to quaternary structure, homodimer.

It is found in the cytoplasm. In terms of biological role, participates actively in the response to hyperosmotic and heat shock by preventing the aggregation of stress-denatured proteins, in association with DnaK and GrpE. It is the nucleotide exchange factor for DnaK and may function as a thermosensor. Unfolded proteins bind initially to DnaJ; upon interaction with the DnaJ-bound protein, DnaK hydrolyzes its bound ATP, resulting in the formation of a stable complex. GrpE releases ADP from DnaK; ATP binding to DnaK triggers the release of the substrate protein, thus completing the reaction cycle. Several rounds of ATP-dependent interactions between DnaJ, DnaK and GrpE are required for fully efficient folding. The protein is Protein GrpE of Listeria welshimeri serovar 6b (strain ATCC 35897 / DSM 20650 / CCUG 15529 / CIP 8149 / NCTC 11857 / SLCC 5334 / V8).